The following is a 359-amino-acid chain: 3-isopropylmalate dehydrogenase (359 aa).

77–88 provides a ligand contact to NAD(+); that stretch reads GPKWGTGDVRPE. Substrate-binding residues include Arg-95, Arg-105, Arg-134, and Asp-223. Positions 223, 248, and 252 each coordinate Mg(2+). 287 to 298 serves as a coordination point for NAD(+); the sequence is GSAPDLPAGKVN.

Belongs to the isocitrate and isopropylmalate dehydrogenases family. As to quaternary structure, homodimer. Mg(2+) serves as cofactor. The cofactor is Mn(2+).

It localises to the cytoplasm. The catalysed reaction is (2R,3S)-3-isopropylmalate + NAD(+) = 4-methyl-2-oxopentanoate + CO2 + NADH. It participates in amino-acid biosynthesis; L-leucine biosynthesis; L-leucine from 3-methyl-2-oxobutanoate: step 3/4. In terms of biological role, catalyzes the oxidation of 3-carboxy-2-hydroxy-4-methylpentanoate (3-isopropylmalate) to 3-carboxy-4-methyl-2-oxopentanoate. The product decarboxylates to 4-methyl-2 oxopentanoate. This is 3-isopropylmalate dehydrogenase (LEU2) from Diutina rugosa (Yeast).